A 599-amino-acid chain; its full sequence is Cytadherence high molecular weight protein 3 (599 aa).

Polar residues predominate over residues 220–236 (VQVDSGSQNHSFNNSPS). The tract at residues 220-241 (VQVDSGSQNHSFNNSPSLKPPL) is disordered.

The protein localises to the cell projection. Its subcellular location is the attachment organelle membrane. Component of the cytoskeleton-like structure which stabilizes the shape of the wall-less mycoplasma. This cytoskeleton-like network of accessory proteins containing HMW proteins 1 to 5 allows the proper anchoring of cytadhesin proteins in the mycoplasmal membrane at the attachment organelle. Essential for successful surface parasitism. In Mycoplasma genitalium (strain ATCC 33530 / DSM 19775 / NCTC 10195 / G37) (Mycoplasmoides genitalium), this protein is Cytadherence high molecular weight protein 3 (hmw3).